Consider the following 428-residue polypeptide: uncharacterized protein (428 aa).

The segment at 1–49 (MRTQTFPPSSSSSRTTHPKKNRHSSNSSSMALVTPAKSSTGAAPKQSSQ) is disordered. Over residues 24 to 49 (SSNSSSMALVTPAKSSTGAAPKQSSQ) the composition is skewed to polar residues.

This is an uncharacterized protein from Caenorhabditis elegans.